Reading from the N-terminus, the 686-residue chain is Chondroitin proteoglycan 1 (686 aa).

The N-terminal stretch at 1-18 (MLPKSVLIVAFLVASSSA) is a signal peptide. N-linked (GlcNAc...) asparagine glycosylation occurs at Asn46. Residues 63–120 (DTDCSTKEDGLYAIGGCSPQFLTCSGGIARIMDCPANLIYDQRIIACEYSYNVPECSG) form the Chitin-binding type-2 1 domain. An intrachain disulfide couples Cys96 to Cys109. A glycan (N-linked (GlcNAc...) asparagine) is linked at Asn143. A Chitin-binding type-2 2 domain is found at 228 to 285 (DKTCNGKADGFYSFGQCSDHYIACSNGYTIPMQCPARLSFDEARVICDYTMNVPECQN). A disulfide bridge connects residues Cys261 and Cys274. The segment at 284–312 (QNGSGNYEGSAEETTTEASGELPYSNGYG) is disordered. Asn285, Asn635, and Asn664 each carry an N-linked (GlcNAc...) asparagine glycan. The interval 658–686 (KLRSATNRTSTKEATTRTQNMHAHYHRNH) is disordered.

Required for polar body extrusion during cytokinesis in embryo development. Affects cortical granule size. Shown to have roles in meiotic chromosome segregation, osmotic barrier function and polarization in conjunction with cpg-2. Binds chitin. The chain is Chondroitin proteoglycan 1 (cpg-1) from Caenorhabditis briggsae.